Consider the following 677-residue polypeptide: DNA ligase (677 aa).

NAD(+) contacts are provided by residues D36–D40, S85–I86, and E122. K124 acts as the N6-AMP-lysine intermediate in catalysis. Residues R145, E181, K298, and K322 each contribute to the NAD(+) site. Zn(2+) contacts are provided by C416, C419, C434, and C440. A BRCT domain is found at L600–D677.

It belongs to the NAD-dependent DNA ligase family. LigA subfamily. The cofactor is Mg(2+). It depends on Mn(2+) as a cofactor.

The catalysed reaction is NAD(+) + (deoxyribonucleotide)n-3'-hydroxyl + 5'-phospho-(deoxyribonucleotide)m = (deoxyribonucleotide)n+m + AMP + beta-nicotinamide D-nucleotide.. Functionally, DNA ligase that catalyzes the formation of phosphodiester linkages between 5'-phosphoryl and 3'-hydroxyl groups in double-stranded DNA using NAD as a coenzyme and as the energy source for the reaction. It is essential for DNA replication and repair of damaged DNA. This chain is DNA ligase, found in Methylibium petroleiphilum (strain ATCC BAA-1232 / LMG 22953 / PM1).